A 158-amino-acid polypeptide reads, in one-letter code: SsrA-binding protein (158 aa).

The protein belongs to the SmpB family.

The protein localises to the cytoplasm. Functionally, required for rescue of stalled ribosomes mediated by trans-translation. Binds to transfer-messenger RNA (tmRNA), required for stable association of tmRNA with ribosomes. tmRNA and SmpB together mimic tRNA shape, replacing the anticodon stem-loop with SmpB. tmRNA is encoded by the ssrA gene; the 2 termini fold to resemble tRNA(Ala) and it encodes a 'tag peptide', a short internal open reading frame. During trans-translation Ala-aminoacylated tmRNA acts like a tRNA, entering the A-site of stalled ribosomes, displacing the stalled mRNA. The ribosome then switches to translate the ORF on the tmRNA; the nascent peptide is terminated with the 'tag peptide' encoded by the tmRNA and targeted for degradation. The ribosome is freed to recommence translation, which seems to be the essential function of trans-translation. In Hydrogenovibrio crunogenus (strain DSM 25203 / XCL-2) (Thiomicrospira crunogena), this protein is SsrA-binding protein.